We begin with the raw amino-acid sequence, 591 residues long: Aspartate--tRNA(Asp/Asn) ligase (591 aa).

Glutamate 175 lines the L-aspartate pocket. Residues 199 to 202 (QQYK) form an aspartate region. Residues arginine 221 and histidine 450 each coordinate L-aspartate. An ATP-binding site is contributed by 221–223 (RDE). Glutamate 484 lines the ATP pocket. Residue arginine 491 coordinates L-aspartate. 536 to 539 (GVDR) serves as a coordination point for ATP.

The protein belongs to the class-II aminoacyl-tRNA synthetase family. Type 1 subfamily. In terms of assembly, homodimer.

The protein resides in the cytoplasm. The catalysed reaction is tRNA(Asx) + L-aspartate + ATP = L-aspartyl-tRNA(Asx) + AMP + diphosphate. Functionally, aspartyl-tRNA synthetase with relaxed tRNA specificity since it is able to aspartylate not only its cognate tRNA(Asp) but also tRNA(Asn). Reaction proceeds in two steps: L-aspartate is first activated by ATP to form Asp-AMP and then transferred to the acceptor end of tRNA(Asp/Asn). This is Aspartate--tRNA(Asp/Asn) ligase from Rhodopseudomonas palustris (strain TIE-1).